A 319-amino-acid polypeptide reads, in one-letter code: 4-hydroxy-3-methylbut-2-enyl diphosphate reductase (319 aa).

Cys-17 lines the [4Fe-4S] cluster pocket. (2E)-4-hydroxy-3-methylbut-2-enyl diphosphate is bound by residues His-46 and His-79. Residues His-46 and His-79 each coordinate dimethylallyl diphosphate. Positions 46 and 79 each coordinate isopentenyl diphosphate. Cys-101 is a binding site for [4Fe-4S] cluster. A (2E)-4-hydroxy-3-methylbut-2-enyl diphosphate-binding site is contributed by His-129. His-129 provides a ligand contact to dimethylallyl diphosphate. Residue His-129 coordinates isopentenyl diphosphate. The active-site Proton donor is the Glu-131. A (2E)-4-hydroxy-3-methylbut-2-enyl diphosphate-binding site is contributed by Thr-170. Residue Cys-200 participates in [4Fe-4S] cluster binding. (2E)-4-hydroxy-3-methylbut-2-enyl diphosphate is bound by residues Ser-228, Ser-229, Asn-230, and Ser-273. Dimethylallyl diphosphate contacts are provided by Ser-228, Ser-229, Asn-230, and Ser-273. Residues Ser-228, Ser-229, Asn-230, and Ser-273 each coordinate isopentenyl diphosphate.

Belongs to the IspH family. The cofactor is [4Fe-4S] cluster.

The enzyme catalyses isopentenyl diphosphate + 2 oxidized [2Fe-2S]-[ferredoxin] + H2O = (2E)-4-hydroxy-3-methylbut-2-enyl diphosphate + 2 reduced [2Fe-2S]-[ferredoxin] + 2 H(+). The catalysed reaction is dimethylallyl diphosphate + 2 oxidized [2Fe-2S]-[ferredoxin] + H2O = (2E)-4-hydroxy-3-methylbut-2-enyl diphosphate + 2 reduced [2Fe-2S]-[ferredoxin] + 2 H(+). Its pathway is isoprenoid biosynthesis; dimethylallyl diphosphate biosynthesis; dimethylallyl diphosphate from (2E)-4-hydroxy-3-methylbutenyl diphosphate: step 1/1. It participates in isoprenoid biosynthesis; isopentenyl diphosphate biosynthesis via DXP pathway; isopentenyl diphosphate from 1-deoxy-D-xylulose 5-phosphate: step 6/6. Its function is as follows. Catalyzes the conversion of 1-hydroxy-2-methyl-2-(E)-butenyl 4-diphosphate (HMBPP) into a mixture of isopentenyl diphosphate (IPP) and dimethylallyl diphosphate (DMAPP). Acts in the terminal step of the DOXP/MEP pathway for isoprenoid precursor biosynthesis. The polypeptide is 4-hydroxy-3-methylbut-2-enyl diphosphate reductase (Cereibacter sphaeroides (strain ATCC 17023 / DSM 158 / JCM 6121 / CCUG 31486 / LMG 2827 / NBRC 12203 / NCIMB 8253 / ATH 2.4.1.) (Rhodobacter sphaeroides)).